Consider the following 109-residue polypeptide: Large ribosomal subunit protein uL22 (109 aa).

This sequence belongs to the universal ribosomal protein uL22 family. Part of the 50S ribosomal subunit.

Its function is as follows. This protein binds specifically to 23S rRNA; its binding is stimulated by other ribosomal proteins, e.g. L4, L17, and L20. It is important during the early stages of 50S assembly. It makes multiple contacts with different domains of the 23S rRNA in the assembled 50S subunit and ribosome. In terms of biological role, the globular domain of the protein is located near the polypeptide exit tunnel on the outside of the subunit, while an extended beta-hairpin is found that lines the wall of the exit tunnel in the center of the 70S ribosome. This Herminiimonas arsenicoxydans protein is Large ribosomal subunit protein uL22.